The primary structure comprises 346 residues: Phosphate acyltransferase (346 aa).

The protein belongs to the PlsX family. In terms of assembly, homodimer. Probably interacts with PlsY.

It is found in the cytoplasm. It catalyses the reaction a fatty acyl-[ACP] + phosphate = an acyl phosphate + holo-[ACP]. It functions in the pathway lipid metabolism; phospholipid metabolism. Its function is as follows. Catalyzes the reversible formation of acyl-phosphate (acyl-PO(4)) from acyl-[acyl-carrier-protein] (acyl-ACP). This enzyme utilizes acyl-ACP as fatty acyl donor, but not acyl-CoA. This is Phosphate acyltransferase from Crocosphaera subtropica (strain ATCC 51142 / BH68) (Cyanothece sp. (strain ATCC 51142)).